The sequence spans 179 residues: Large ribosomal subunit protein uL5 (179 aa).

The protein belongs to the universal ribosomal protein uL5 family. In terms of assembly, part of the 50S ribosomal subunit; part of the 5S rRNA/L5/L18/L25 subcomplex. Contacts the 5S rRNA and the P site tRNA. Forms a bridge to the 30S subunit in the 70S ribosome.

In terms of biological role, this is one of the proteins that bind and probably mediate the attachment of the 5S RNA into the large ribosomal subunit, where it forms part of the central protuberance. In the 70S ribosome it contacts protein S13 of the 30S subunit (bridge B1b), connecting the 2 subunits; this bridge is implicated in subunit movement. Contacts the P site tRNA; the 5S rRNA and some of its associated proteins might help stabilize positioning of ribosome-bound tRNAs. This Verminephrobacter eiseniae (strain EF01-2) protein is Large ribosomal subunit protein uL5.